We begin with the raw amino-acid sequence, 279 residues long: Undecaprenyl-diphosphatase (279 aa).

The next 8 membrane-spanning stretches (helical) occupy residues 2–22, 44–64, 85–105, 113–133, 163–183, 188–208, 223–243, and 255–275; these read LIIELLKAIFFGIIEGITEWL, AFIEMFNIVIQLGAIIAVMLI, WQLWLKVVIACIPSILIAVPL, FYFMVPIAIALIVYGIAFIWI, VLSIVPGTSRSGATILGAIIL, TVAADFTFFLAIPTMFGYSGL, AQVLILLVASLTAFVVSLLAI, and FTIFGKYRIVLGSLLLIYSFF.

This sequence belongs to the UppP family.

It localises to the cell membrane. The enzyme catalyses di-trans,octa-cis-undecaprenyl diphosphate + H2O = di-trans,octa-cis-undecaprenyl phosphate + phosphate + H(+). Its function is as follows. Catalyzes the dephosphorylation of undecaprenyl diphosphate (UPP). Confers resistance to bacitracin. The chain is Undecaprenyl-diphosphatase from Streptococcus pyogenes serotype M2 (strain MGAS10270).